Reading from the N-terminus, the 355-residue chain is Protein MGF 360-10L (355 aa).

The ANK repeat unit spans residues Asp-57–Ile-89.

It belongs to the asfivirus MGF 360 family.

Its function is as follows. Plays a role in virus cell tropism, and may be required for efficient virus replication in macrophages. The chain is Protein MGF 360-10L from African swine fever virus (isolate Tick/Malawi/Lil 20-1/1983) (ASFV).